The sequence spans 270 residues: Cyclic AMP-dependent transcription factor ATF-1 (270 aa).

The interval 1–91 (MEDSHKSNTS…DGENPGVSAV (91 aa)) is disordered. The segment covering 9-21 (TSETAPQSGSTVQ) has biased composition (polar residues). A KID domain is found at 31-90 (QVSSLSESEESQDSSDSIGSSQKTHGILARRPSYRKILKDLSSEDIRGRKGDGENPGVSA). Serine 63 bears the Phosphoserine; by CaMK1, CDK3, RPS6KA4 and RPS6KA5 mark. The span at 67–83 (ILKDLSSEDIRGRKGDG) shows a compositional bias: basic and acidic residues. Position 197 is a phosphoserine; by HIPK2 (serine 197). Glycyl lysine isopeptide (Lys-Gly) (interchain with G-Cter in SUMO2) cross-links involve residues lysine 207 and lysine 214. A bZIP domain is found at 212-270 (QLKREIRLMKNREAARECRRKKKEYVKCLENRVAVLENQNKTLIEELKTLKDLYSNKSV). Residues 214–238 (KREIRLMKNREAARECRRKKKEYVK) form a basic motif region. The interval 240-261 (LENRVAVLENQNKTLIEELKTL) is leucine-zipper.

Belongs to the bZIP family. ATF subfamily. As to quaternary structure, binds DNA as a dimer. Interacts with HIPK2 and CDK3. Interacts with MOTS-c, a peptide produced by the mitochondrially encoded 12S rRNA MT-RNR1; the interaction occurs in the nucleus following metabolic stress. Phosphorylated at Ser-197 by HIPK2 in response to genotoxic stress. This phosphorylation promotes transcription repression of FTH1 and other antioxidant detoxification genes. The CDK3-mediated phosphorylation at Ser-63 promotes its transactivation and transcriptional activities. Phosphorylated at Ser-63 by RPS6KA4 and RPS6KA5 in response to mitogenic or stress stimuli.

The protein resides in the nucleus. Functionally, this protein binds the cAMP response element (CRE) (consensus: 5'-GTGACGT[AC][AG]-3'), a sequence present in many viral and cellular promoters. Mediates PKA-induced stimulation of CRE-reporter genes. Represses the expression of FTH1 and other antioxidant detoxification genes. Triggers cell proliferation and transformation. This Bos taurus (Bovine) protein is Cyclic AMP-dependent transcription factor ATF-1 (ATF1).